The following is a 210-amino-acid chain: Ribosomal RNA small subunit methyltransferase G (210 aa).

S-adenosyl-L-methionine is bound by residues Gly-76, Leu-81, 127-128, and Arg-142; that span reads VE.

It belongs to the methyltransferase superfamily. RNA methyltransferase RsmG family.

It localises to the cytoplasm. It carries out the reaction guanosine(527) in 16S rRNA + S-adenosyl-L-methionine = N(7)-methylguanosine(527) in 16S rRNA + S-adenosyl-L-homocysteine. Specifically methylates the N7 position of guanine in position 527 of 16S rRNA. In Aliivibrio fischeri (strain ATCC 700601 / ES114) (Vibrio fischeri), this protein is Ribosomal RNA small subunit methyltransferase G.